The primary structure comprises 455 residues: MAKASRLTRSTGQPTEVSEGQVTGTSEMPPTGEEPSGHAESKPPASDPMSTPGTGQEQLPLSGIRVIDVGNFLAGPYAASILGEFGAEVLKIEHPLGGDPMRRFGTATARHDATLAWLSEARNRKSVTIDLRQQEGVALFLKLVAKSDILIENFRPGTMEEWGLSWPVLQATNPGLIMLRVSGYGQTGPYRRRSGFAHIAHAFSGLSYLAGFPGETPVLPGTAPLGDYIASLFGAIGILIALRHKEQTGRGQLIDVGIYEAVFRILDEIAPAYGLFGKIREREGAGSFIAVPHGHFRSKDGKWVAIACTTDKMFERLAEAMERPELASPELYGDQRKRLAARDIVNQITIEWVGSLTRDEVMRRCLEKEVPVGPLNSIADMFNDEHFLARGNFACIEAEGIGEVVVPNVIPRLSETPGRVTNLGPPLGNATYEVLRELLDISAEEIKRLRSRKII.

A disordered region spans residues 1-58 (MAKASRLTRSTGQPTEVSEGQVTGTSEMPPTGEEPSGHAESKPPASDPMSTPGTGQEQ). Composition is skewed to polar residues over residues 7–28 (LTRSTGQPTEVSEGQVTGTSEM) and 48–58 (PMSTPGTGQEQ). Residue D227 is the Nucleophile of the active site.

Belongs to the CoA-transferase III family. Forms a large complex composed of six heterodimers (alpha, beta).

It carries out the reaction succinyl-CoA + (S)-malate = (S)-malyl-CoA + succinate. It catalyses the reaction (3S)-citramalate + succinyl-CoA = (3S)-citramalyl-CoA + succinate. Involved in the 3-hydroxypropionate cycle used for autotrophic carbon dioxide fixation. Catalyzes the transfer of CoA moiety from succinyl-CoA to L-malate to yield L-malyl-CoA. This Chloroflexus aurantiacus (strain ATCC 29366 / DSM 635 / J-10-fl) protein is Succinyl-CoA--L-malate CoA-transferase alpha subunit (smtA).